The following is a 1029-amino-acid chain: Toll-like receptor 9 (1029 aa).

An N-terminal signal peptide occupies residues 1–24; it reads MGPYCAPHPLSLLVQAAALAAALA. The Extracellular portion of the chain corresponds to 25–815; sequence EGTLPAFLPC…LCLDETLSLD (791 aa). Cysteines 34 and 44 form a disulfide. Residue 46–50 participates in DNA binding; it reads WLFLK. LRR repeat units lie at residues 61–84, 86–109, 121–146, 149–165, 166–189, 197–220, 222–241, 242–267, 282–305, 307–331, 332–355, 362–385, 389–412, 414–439, 469–492, 494–517, 518–541, 543–570, 572–596, 598–620, 625–648, 650–673, 674–697, 699–721, 722–745, and 747–770; these read RANV…DFVH, SNLR…HFPC, VPTL…SLVS, LSHT…FTGL, HALR…ALEV, LGNL…LPPS, DTLL…DLAN, LTAL…CREC, LSRL…WFRG, GRLQ…IFND, LTQL…HLHL, LVSL…TLQS, LPKL…IFGA, PSLL…LGEV, CNLN…MFTR, SRLQ…QFVP, LTSL…SFTE, PQLE…SFVA, LPSL…LSSA, LRAL…LYLC, LRNL…HLDN, PKSL…SLTV, LPRL…SLPP, IRLQ…FFVR, ATRL…WFGS, and AGTL…AFVD. Asn-63 carries N-linked (GlcNAc...) asparagine glycosylation. Residues 71-76 and 94-108 contribute to the DNA site; these read SNRIHH and KWNC…MHFP. Residues Cys-97 and Cys-109 are joined by a disulfide bond. A glycan (N-linked (GlcNAc...) asparagine) is linked at Asn-128. Tyr-131 provides a ligand contact to DNA. Residues Cys-177 and Cys-183 are joined by a disulfide bond. 178-180 provides a ligand contact to DNA; the sequence is YYM. The N-linked (GlcNAc...) asparagine glycan is linked to Asn-199. Tyr-207 is a binding site for DNA. Asn-209 and Asn-241 each carry an N-linked (GlcNAc...) asparagine glycan. Intrachain disulfides connect Cys-254/Cys-267 and Cys-257/Cys-264. Residue Cys-257 is the site of S-palmitoyl cysteine attachment. Arg-261 contributes to the DNA binding site. Residue Cys-264 is the site of S-palmitoyl cysteine attachment. 2 N-linked (GlcNAc...) asparagine glycosylation sites follow: Asn-339 and Asn-380. A disulfide bridge connects residues Cys-469 and Cys-498. N-linked (GlcNAc...) asparagine glycans are attached at residues Asn-472 and Asn-511. Asn-565 is a glycosylation site (N-linked (GlcNAc...) asparagine). N-linked (GlcNAc...) asparagine glycosylation is found at Asn-667 and Asn-692. The N-linked (GlcNAc...) asparagine glycan is linked to Asn-729. Intrachain disulfides connect Cys-762–Cys-788 and Cys-764–Cys-807. Residues 816–836 form a helical membrane-spanning segment; that stretch reads CFGLSLLMVALGLAVPMLHHL. Over 837-1029 the chain is Cytoplasmic; that stretch reads CGWDLWYCFH…NFCRGPTTAE (193 aa). One can recognise a TIR domain in the interval 864-1009; the sequence is LLYDAVVVFD…SFWANLGIAL (146 aa).

This sequence belongs to the Toll-like receptor family. As to quaternary structure, monomer and homodimer. Exists as a monomer in the absence of unmethylated cytidine-phosphate-guanosine (CpG) ligand. Proteolytic processing of an insertion loop (Z-loop) is required for homodimerization upon binding to the unmethylated CpG ligand leading to its activation. Interacts with MYD88 via their respective TIR domains. Interacts with BTK. Interacts (via transmembrane domain) with UNC93B1. Interacts with CD300LH; the interaction may promote full activation of TLR9-triggered innate responses. Interacts with CNPY3 and HSP90B1; this interaction is required for proper folding in the endoplasmic reticulum. Interacts with SMPDL3B. Interacts with CD82; this interaction is essential for TLR9-dependent myddosome formation in response to CpG stimulation. Activated by proteolytic cleavage of the flexible loop between repeats LRR14 and LRR15 within the ectodomain. Cleavage requires UNC93B1. Proteolytically processed by first removing the majority of the ectodomain by either asparagine endopeptidase (AEP) or a cathepsin followed by a trimming event that is solely cathepsin mediated and required for optimal receptor signaling. Post-translationally, palmitoylated by ZDHHC3 in the Golgi regulates TLR9 trafficking from the Golgi to endosomes. Depalmitoylation by PPT1 controls the release of TLR9 from UNC93B1 in endosomes.

It is found in the endoplasmic reticulum membrane. The protein localises to the endosome. It localises to the lysosome. The protein resides in the cytoplasmic vesicle. Its subcellular location is the phagosome. Functionally, key component of innate and adaptive immunity. TLRs (Toll-like receptors) control host immune response against pathogens through recognition of molecular patterns specific to microorganisms. TLR9 is a nucleotide-sensing TLR which is activated by unmethylated cytidine-phosphate-guanosine (CpG) dinucleotides. Acts via MYD88 and TRAF6, leading to NF-kappa-B activation, cytokine secretion and the inflammatory response. Upon CpG stimulation, induces B-cell proliferation, activation, survival and antibody production. The chain is Toll-like receptor 9 (TLR9) from Bos taurus (Bovine).